Here is a 288-residue protein sequence, read N- to C-terminus: Acetyl-coenzyme A carboxylase carboxyl transferase subunit beta (288 aa).

The region spanning 34 to 288 (LFAKCPACKH…HLVAFHGGVS (255 aa)) is the CoA carboxyltransferase N-terminal domain. Zn(2+) contacts are provided by Cys-38, Cys-41, Cys-56, and Cys-59. A C4-type zinc finger spans residues 38 to 59 (CPACKHMIYQKDLGPAKICPTC).

Belongs to the AccD/PCCB family. Acetyl-CoA carboxylase is a heterohexamer composed of biotin carboxyl carrier protein (AccB), biotin carboxylase (AccC) and two subunits each of ACCase subunit alpha (AccA) and ACCase subunit beta (AccD). Requires Zn(2+) as cofactor.

It localises to the cytoplasm. It carries out the reaction N(6)-carboxybiotinyl-L-lysyl-[protein] + acetyl-CoA = N(6)-biotinyl-L-lysyl-[protein] + malonyl-CoA. It functions in the pathway lipid metabolism; malonyl-CoA biosynthesis; malonyl-CoA from acetyl-CoA: step 1/1. Functionally, component of the acetyl coenzyme A carboxylase (ACC) complex. Biotin carboxylase (BC) catalyzes the carboxylation of biotin on its carrier protein (BCCP) and then the CO(2) group is transferred by the transcarboxylase to acetyl-CoA to form malonyl-CoA. The protein is Acetyl-coenzyme A carboxylase carboxyl transferase subunit beta of Streptococcus equi subsp. equi (strain 4047).